Consider the following 353-residue polypeptide: Phosphate acyltransferase (353 aa).

This sequence belongs to the PlsX family. As to quaternary structure, homodimer. Probably interacts with PlsY.

It localises to the cytoplasm. The enzyme catalyses a fatty acyl-[ACP] + phosphate = an acyl phosphate + holo-[ACP]. The protein operates within lipid metabolism; phospholipid metabolism. Catalyzes the reversible formation of acyl-phosphate (acyl-PO(4)) from acyl-[acyl-carrier-protein] (acyl-ACP). This enzyme utilizes acyl-ACP as fatty acyl donor, but not acyl-CoA. The chain is Phosphate acyltransferase from Rhodopseudomonas palustris (strain ATCC BAA-98 / CGA009).